Here is a 60-residue protein sequence, read N- to C-terminus: UPF0434 protein KPK_3615 (60 aa).

Belongs to the UPF0434 family.

This Klebsiella pneumoniae (strain 342) protein is UPF0434 protein KPK_3615.